We begin with the raw amino-acid sequence, 430 residues long: Enolase (430 aa).

Gln163 is a binding site for (2R)-2-phosphoglycerate. The Proton donor role is filled by Glu205. Mg(2+)-binding residues include Asp242, Glu286, and Asp313. (2R)-2-phosphoglycerate contacts are provided by Lys338, Arg367, Ser368, and Lys389. Lys338 acts as the Proton acceptor in catalysis.

This sequence belongs to the enolase family. Mg(2+) is required as a cofactor.

Its subcellular location is the cytoplasm. It localises to the secreted. The protein resides in the cell surface. The enzyme catalyses (2R)-2-phosphoglycerate = phosphoenolpyruvate + H2O. It participates in carbohydrate degradation; glycolysis; pyruvate from D-glyceraldehyde 3-phosphate: step 4/5. Functionally, catalyzes the reversible conversion of 2-phosphoglycerate (2-PG) into phosphoenolpyruvate (PEP). It is essential for the degradation of carbohydrates via glycolysis. This chain is Enolase, found in Geotalea daltonii (strain DSM 22248 / JCM 15807 / FRC-32) (Geobacter daltonii).